The primary structure comprises 602 residues: DEAD-box ATP-dependent RNA helicase 53 (602 aa).

Over residues 33-43 (ASPLDPCRGPA) the composition is skewed to low complexity. The segment at 33-76 (ASPLDPCRGPAAPEPPRRRAFHGSPSPLGFRSTPASWSSPEAGA) is disordered. The Q motif signature appears at 84 to 112 (LEVARLGISPWIVERLAARGITRLFPIQR). The 174-residue stretch at 115–288 (LDPAMQGKDM…SKYLKDPIII (174 aa)) folds into the Helicase ATP-binding domain. 128–135 (ARTGTGKT) is a binding site for ATP. Positions 236 to 239 (DEAD) match the DEAD box motif. Residues 317–462 (ILGPLIKEHA…LPKIEVADEA (146 aa)) enclose the Helicase C-terminal domain. Residues 503-602 (FGDFDGFGSS…GRSGGFDDSN (100 aa)) are disordered.

This sequence belongs to the DEAD box helicase family. DDX21/DDX50 subfamily.

It catalyses the reaction ATP + H2O = ADP + phosphate + H(+). In Oryza sativa subsp. japonica (Rice), this protein is DEAD-box ATP-dependent RNA helicase 53.